The following is a 116-amino-acid chain: UPF0102 protein LBJ_1427 (116 aa).

It belongs to the UPF0102 family.

This chain is UPF0102 protein LBJ_1427, found in Leptospira borgpetersenii serovar Hardjo-bovis (strain JB197).